The following is a 428-amino-acid chain: Dihydroorotase (428 aa).

His-59 and His-61 together coordinate Zn(2+). Substrate contacts are provided by residues 61-63 and Asn-93; that span reads HLR. 3 residues coordinate Zn(2+): Asp-151, His-178, and His-231. A substrate-binding site is contributed by Asn-277. Asp-304 provides a ligand contact to Zn(2+). Asp-304 is an active-site residue. Substrate-binding positions include His-308 and 322-323; that span reads FG.

The protein belongs to the metallo-dependent hydrolases superfamily. DHOase family. Class I DHOase subfamily. The cofactor is Zn(2+).

The catalysed reaction is (S)-dihydroorotate + H2O = N-carbamoyl-L-aspartate + H(+). Its pathway is pyrimidine metabolism; UMP biosynthesis via de novo pathway; (S)-dihydroorotate from bicarbonate: step 3/3. Functionally, catalyzes the reversible cyclization of carbamoyl aspartate to dihydroorotate. The protein is Dihydroorotase of Bacillus cereus (strain ATCC 10987 / NRS 248).